The primary structure comprises 20 residues: Dentinal fluid transport-stimulating peptide (20 aa).

Residues 1-20 (GVIAWELQHNEPGRKDSTAG) form a disordered region. Residues 8–20 (QHNEPGRKDSTAG) are compositionally biased toward basic and acidic residues.

This peptide stimulates the transport of dentinal fluid, which is important for the prevention of dental caries. The sequence is that of Dentinal fluid transport-stimulating peptide from Rattus norvegicus (Rat).